A 245-amino-acid polypeptide reads, in one-letter code: 4-hydroxy-tetrahydrodipicolinate reductase (245 aa).

NAD(+) contacts are provided by residues 7–12, 75–77, and 102–105; these read GAKGKV, GTT, and APNF. The active-site Proton donor/acceptor is His132. His133 serves as a coordination point for (S)-2,3,4,5-tetrahydrodipicolinate. The Proton donor role is filled by Lys136. Position 142-143 (142-143) interacts with (S)-2,3,4,5-tetrahydrodipicolinate; sequence GT.

It belongs to the DapB family.

Its subcellular location is the cytoplasm. It carries out the reaction (S)-2,3,4,5-tetrahydrodipicolinate + NAD(+) + H2O = (2S,4S)-4-hydroxy-2,3,4,5-tetrahydrodipicolinate + NADH + H(+). The enzyme catalyses (S)-2,3,4,5-tetrahydrodipicolinate + NADP(+) + H2O = (2S,4S)-4-hydroxy-2,3,4,5-tetrahydrodipicolinate + NADPH + H(+). It functions in the pathway amino-acid biosynthesis; L-lysine biosynthesis via DAP pathway; (S)-tetrahydrodipicolinate from L-aspartate: step 4/4. Catalyzes the conversion of 4-hydroxy-tetrahydrodipicolinate (HTPA) to tetrahydrodipicolinate. This Mycobacterium marinum (strain ATCC BAA-535 / M) protein is 4-hydroxy-tetrahydrodipicolinate reductase.